A 640-amino-acid chain; its full sequence is Phosphomethylpyrimidine synthase (640 aa).

Substrate-binding positions include asparagine 235, methionine 264, tyrosine 293, histidine 329, 349-351 (SRG), 390-393 (DGLR), and glutamate 429. Residue histidine 433 participates in Zn(2+) binding. A substrate-binding site is contributed by tyrosine 456. Position 497 (histidine 497) interacts with Zn(2+). [4Fe-4S] cluster contacts are provided by cysteine 577, cysteine 580, and cysteine 585.

It belongs to the ThiC family. In terms of assembly, homodimer. Requires [4Fe-4S] cluster as cofactor.

It carries out the reaction 5-amino-1-(5-phospho-beta-D-ribosyl)imidazole + S-adenosyl-L-methionine = 4-amino-2-methyl-5-(phosphooxymethyl)pyrimidine + CO + 5'-deoxyadenosine + formate + L-methionine + 3 H(+). Its pathway is cofactor biosynthesis; thiamine diphosphate biosynthesis. Catalyzes the synthesis of the hydroxymethylpyrimidine phosphate (HMP-P) moiety of thiamine from aminoimidazole ribotide (AIR) in a radical S-adenosyl-L-methionine (SAM)-dependent reaction. This Photobacterium profundum (strain SS9) protein is Phosphomethylpyrimidine synthase.